The chain runs to 440 residues: Argininosuccinate lyase (440 aa).

This sequence belongs to the lyase 1 family. Argininosuccinate lyase subfamily.

The protein localises to the cytoplasm. It carries out the reaction 2-(N(omega)-L-arginino)succinate = fumarate + L-arginine. The protein operates within amino-acid biosynthesis; L-arginine biosynthesis; L-arginine from L-ornithine and carbamoyl phosphate: step 3/3. The polypeptide is Argininosuccinate lyase (Clostridium botulinum (strain Langeland / NCTC 10281 / Type F)).